The sequence spans 551 residues: CTP synthase (551 aa).

The tract at residues 1 to 265 (MTRYLFITGG…DHIVAEKWGL (265 aa)) is amidoligase domain. Ser-13 lines the CTP pocket. Ser-13 lines the UTP pocket. ATP-binding positions include 14-19 (SLGKGI) and Asp-71. Asp-71 and Glu-139 together coordinate Mg(2+). CTP-binding positions include 146-148 (DIE), 186-191 (KTKPTQ), and Lys-222. Residues 186–191 (KTKPTQ) and Lys-222 each bind UTP. The Glutamine amidotransferase type-1 domain maps to 290-541 (TVAMVGKYVD…LRAAIAHRDG (252 aa)). Residue Gly-351 participates in L-glutamine binding. The active-site Nucleophile; for glutamine hydrolysis is Cys-378. Residues 379 to 382 (LGMQ), Glu-402, and Arg-469 contribute to the L-glutamine site. Residues His-514 and Glu-516 contribute to the active site.

Belongs to the CTP synthase family. As to quaternary structure, homotetramer.

The catalysed reaction is UTP + L-glutamine + ATP + H2O = CTP + L-glutamate + ADP + phosphate + 2 H(+). It catalyses the reaction L-glutamine + H2O = L-glutamate + NH4(+). It carries out the reaction UTP + NH4(+) + ATP = CTP + ADP + phosphate + 2 H(+). Its pathway is pyrimidine metabolism; CTP biosynthesis via de novo pathway; CTP from UDP: step 2/2. With respect to regulation, allosterically activated by GTP, when glutamine is the substrate; GTP has no effect on the reaction when ammonia is the substrate. The allosteric effector GTP functions by stabilizing the protein conformation that binds the tetrahedral intermediate(s) formed during glutamine hydrolysis. Inhibited by the product CTP, via allosteric rather than competitive inhibition. Catalyzes the ATP-dependent amination of UTP to CTP with either L-glutamine or ammonia as the source of nitrogen. Regulates intracellular CTP levels through interactions with the four ribonucleotide triphosphates. This is CTP synthase from Halorhodospira halophila (strain DSM 244 / SL1) (Ectothiorhodospira halophila (strain DSM 244 / SL1)).